The sequence spans 162 residues: Phospholipase A2 (162 aa).

Residues 1–22 (MKVLQMFFCVILLCVTSVLVEA) form the signal peptide. The propeptide occupies 23 to 35 (KSTTKGDETASKR). Disulfide bonds link Cys-60-Cys-155, Cys-62-Cys-78, Cys-77-Cys-134, Cys-84-Cys-127, Cys-94-Cys-120, and Cys-113-Cys-125. Ca(2+) contacts are provided by Tyr-61, Gly-63, and Gly-65. The active site involves His-81. Residue Asp-82 participates in Ca(2+) binding. Asp-128 is an active-site residue.

Belongs to the phospholipase A2 family. Group I subfamily. D49 sub-subfamily. Ca(2+) serves as cofactor. Expressed both outside and in acontia, a specialised envenomation structure laden with batteries of venom-containing nematocysts found only in the superfamily Metridioidea.

The protein resides in the secreted. It is found in the nematocyst. The enzyme catalyses a 1,2-diacyl-sn-glycero-3-phosphocholine + H2O = a 1-acyl-sn-glycero-3-phosphocholine + a fatty acid + H(+). Functionally, PLA2 catalyzes the calcium-dependent hydrolysis of the 2-acyl groups in 3-sn-phosphoglycerides. This is Phospholipase A2 from Calliactis polypus (Hermit crab anemone).